The chain runs to 355 residues: Protein RecA (355 aa).

72 to 79 (GPESSGKT) is a binding site for ATP.

The protein belongs to the RecA family.

It is found in the cytoplasm. Can catalyze the hydrolysis of ATP in the presence of single-stranded DNA, the ATP-dependent uptake of single-stranded DNA by duplex DNA, and the ATP-dependent hybridization of homologous single-stranded DNAs. It interacts with LexA causing its activation and leading to its autocatalytic cleavage. In Wolbachia sp. subsp. Drosophila simulans (strain wRi), this protein is Protein RecA.